Consider the following 354-residue polypeptide: Membrane progestin receptor beta (354 aa).

Over 1-75 the chain is Cytoplasmic; that stretch reads MTTAILQRLS…FFSLFQKHNE (75 aa). A helical transmembrane segment spans residues 76–96; it reads VVNVWTHLLAALAVLLRFWAF. At 97 to 111 the chain is on the extracellular side; sequence VETEGLPWTSAHTLP. A helical transmembrane segment spans residues 112-132; sequence LLLYVLSSITYLTFSLLAHLL. The Cytoplasmic portion of the chain corresponds to 133–174; sequence QSKSELSHYTFYFVDYVGVSVYQYGSALVHFFYASDQAWYER. A helical transmembrane segment spans residues 175 to 195; that stretch reads FWLFFLPAAAFCGWLSCTGCC. Over 196–213 the chain is Extracellular; that stretch reads YAKYRYRRPYPVMRKVCQ. Residues 214 to 234 traverse the membrane as a helical segment; that stretch reads VVPAGLAFILDISPVAHRVAL. Residues 235–243 lie on the Cytoplasmic side of the membrane; it reads CHLSGCQEQ. Residues 244-264 traverse the membrane as a helical segment; that stretch reads AAWYHTLQIVFFLVSAYFFSC. The Extracellular portion of the chain corresponds to 265-283; that stretch reads PVPEKYFPGSCDIVGHGHQ. The chain crosses the membrane as a helical span at residues 284–304; the sequence is IFHAFLSICTLSQLEAILLDY. Residues 305–319 are Cytoplasmic-facing; the sequence is KGRQEIFLHRHSPLS. The helical transmembrane segment at 320–340 threads the bilayer; it reads IYAACLSFFFLVACSGATAAL. The Extracellular portion of the chain corresponds to 341-354; that stretch reads LREKIKARLSKKDS.

This sequence belongs to the ADIPOR family.

The protein localises to the cell membrane. Functionally, steroid membrane receptor. Binds progesterone. May be involved in oocyte maturation. The chain is Membrane progestin receptor beta (PAQR8) from Sus scrofa (Pig).